Consider the following 299-residue polypeptide: Putative cuticle collagen 155 (299 aa).

The signal sequence occupies residues 1–27; it reads MEFEQRIKAYRFVAYSAVAFSVVAVLS. Triple-helical region regions lie at residues 103–132, 151–177, 181–202, and 216–278; these read GAAGPAGTPGKPGRPGKPGAPGLPGNPGHP, GPPGPPGPPGPSGDAGGNGNPGSPGQD, GAPGNKGPSGPNGNPGAPGAPG, and GAPG…VGEK. Residues 107–278 are disordered; the sequence is PAGTPGKPGR…SGTPGGVGEK (172 aa). The span at 129–161 shows a compositional bias: pro residues; the sequence is PGHPPQQPCDPITPPPCQPCPQGPPGPPGPPGP. Gly residues predominate over residues 163-172; that stretch reads GDAGGNGNPG. Low complexity predominate over residues 173 to 197; it reads SPGQDGQPGAPGNKGPSGPNGNPGA. Pro residues predominate over residues 215 to 233; sequence PGAPGPQGTPGPQGPPGQP. Residues 250-268 are compositionally biased toward low complexity; sequence PNGNPGQPGADGNPGAPGQ.

Belongs to the cuticular collagen family. Collagen polypeptide chains are complexed within the cuticle by disulfide bonds and other types of covalent cross-links.

Its function is as follows. Nematode cuticles are composed largely of collagen-like proteins. The cuticle functions both as an exoskeleton and as a barrier to protect the worm from its environment. In Caenorhabditis elegans, this protein is Putative cuticle collagen 155 (col-155).